The following is a 186-amino-acid chain: Elongation factor P (186 aa).

It belongs to the elongation factor P family.

It is found in the cytoplasm. It functions in the pathway protein biosynthesis; polypeptide chain elongation. Functionally, involved in peptide bond synthesis. Stimulates efficient translation and peptide-bond synthesis on native or reconstituted 70S ribosomes in vitro. Probably functions indirectly by altering the affinity of the ribosome for aminoacyl-tRNA, thus increasing their reactivity as acceptors for peptidyl transferase. This chain is Elongation factor P, found in Clostridium acetobutylicum (strain ATCC 824 / DSM 792 / JCM 1419 / IAM 19013 / LMG 5710 / NBRC 13948 / NRRL B-527 / VKM B-1787 / 2291 / W).